Consider the following 160-residue polypeptide: Cytochrome b6-f complex subunit 4 (160 aa).

3 consecutive transmembrane segments (helical) span residues 36-56 (LLYI…GLSV), 95-115 (LLGV…PFIE), and 127-147 (PVAM…GIGA).

The protein belongs to the cytochrome b family. PetD subfamily. In terms of assembly, the 4 large subunits of the cytochrome b6-f complex are cytochrome b6, subunit IV (17 kDa polypeptide, petD), cytochrome f and the Rieske protein, while the 4 small subunits are petG, petL, petM and petN. The complex functions as a dimer.

The protein resides in the plastid. The protein localises to the chloroplast thylakoid membrane. Its function is as follows. Component of the cytochrome b6-f complex, which mediates electron transfer between photosystem II (PSII) and photosystem I (PSI), cyclic electron flow around PSI, and state transitions. This chain is Cytochrome b6-f complex subunit 4, found in Guillardia theta (Cryptophyte).